Here is a 224-residue protein sequence, read N- to C-terminus: UPF0758 protein Pmen_4376 (224 aa).

The MPN domain occupies 102–224 (ALESPQAVRD…PLSMAELGWM (123 aa)). Residues His173, His175, and Asp186 each contribute to the Zn(2+) site. The JAMM motif signature appears at 173-186 (HNHPSGVCEPSQAD).

This sequence belongs to the UPF0758 family.

This chain is UPF0758 protein Pmen_4376, found in Ectopseudomonas mendocina (strain ymp) (Pseudomonas mendocina).